The primary structure comprises 249 residues: Coproheme decarboxylase (249 aa).

Fe-coproporphyrin III-binding positions include R131, 145 to 149 (YPMDK), H172, Q185, and S223. Y145 is a catalytic residue.

It belongs to the ChdC family. Type 1 subfamily. Fe-coproporphyrin III serves as cofactor.

It catalyses the reaction Fe-coproporphyrin III + 2 H2O2 + 2 H(+) = heme b + 2 CO2 + 4 H2O. The enzyme catalyses Fe-coproporphyrin III + H2O2 + H(+) = harderoheme III + CO2 + 2 H2O. The catalysed reaction is harderoheme III + H2O2 + H(+) = heme b + CO2 + 2 H2O. It participates in porphyrin-containing compound metabolism; protoheme biosynthesis. Functionally, involved in coproporphyrin-dependent heme b biosynthesis. Catalyzes the decarboxylation of Fe-coproporphyrin III (coproheme) to heme b (protoheme IX), the last step of the pathway. The reaction occurs in a stepwise manner with a three-propionate intermediate. In Shouchella clausii (strain KSM-K16) (Alkalihalobacillus clausii), this protein is Coproheme decarboxylase.